A 389-amino-acid polypeptide reads, in one-letter code: Sterol methyltransferase-like 1 (389 aa).

A helical membrane pass occupies residues 25–45; sequence IAAGVTAAVVIGGYIWIITEL.

This sequence belongs to the class I-like SAM-binding methyltransferase superfamily. Erg6/SMT family.

It is found in the microsome membrane. Unable to convert squalene, botryococcene, cycloartenol, zymosterol or lanosterol to mono-, di-, tri- or tetramethylated derivatives. This Botryococcus braunii (Green alga) protein is Sterol methyltransferase-like 1 (SMT-1).